The sequence spans 387 residues: MVHCSCVLFRKYGNFIDKLRLFTRGGSGGMGYPRLGGEGGKGGDVWVVAQNRMTLKQLKDRYPRKRFVAGVGANSKISALKGSKGKDCEIPVPVGISVTDENGKIIGELNKENDRILVAQGGLGGKLLTNFLPLKGQKRIIHLDLKLIADVGLVGFPNAGKSSLLSCVSHAKPAIADYAFTTLKPELGKIMYSDFKQISVADLPGLIEGAHMNKGMGHKFLKHIERTRQLLFVVDISGFQLSSHTQYRTAFETIILLTKELELYKEELQTKPALLAVNKMDLPDAQDKFHELMSQLQNPKDFLHLFEKNMIPERTVEFQHIIPISAVTGEGIEELKNCIRKSLDEQANQENDALHKKQLLNLWISDTMSSTEPPSKHAVTTSKMDII.

The Obg domain maps to 13–148 (GNFIDKLRLF…RIIHLDLKLI (136 aa)). Residues 149–344 (ADVGLVGFPN…LKNCIRKSLD (196 aa)) enclose the OBG-type G domain. Residues 155–162 (GFPNAGKS), 202–206 (DLPGL), and 278–281 (NKMD) each bind GTP.

This sequence belongs to the TRAFAC class OBG-HflX-like GTPase superfamily. OBG GTPase family.

It localises to the nucleus. The protein localises to the nucleolus. Its subcellular location is the chromosome. Functionally, may be involved in the ribosome maturation process. Complements an ObgE(CgtA) function in E.coli ribosome maturation. Plays a role of GTPase in vitro. When missing, disorganization of the nucleolar architecture is observed. This chain is GTP-binding protein 10 (GTPBP10), found in Homo sapiens (Human).